Consider the following 514-residue polypeptide: Ubiquitin carboxyl-terminal hydrolase 22 (514 aa).

Residues 10 to 127 (PGCAHLGSFK…KEEQRKAWKM (118 aa)) form a UBP-type zinc finger. Positions 12, 14, 52, 55, 65, 68, 73, 78, 82, 88, 101, and 104 each coordinate Zn(2+). K118 bears the N6-acetyllysine mark. Residue T136 is modified to Phosphothreonine. The 345-residue stretch at 165-509 (RGLINLGNTC…EGYLLFYHKQ (345 aa)) folds into the USP domain. The active-site Nucleophile is the C174. S226 carries the phosphoserine modification. H468 functions as the Proton acceptor in the catalytic mechanism.

The protein belongs to the peptidase C19 family. UBP8 subfamily. As to quaternary structure, component of some SAGA transcription coactivator-HAT complexes, at least composed of ATXN7, ATXN7L3, ENY2, GCN5L2, SUPT3H, TAF10, TRRAP and USP22. Within the SAGA complex, ATXN7L3, ENY2 and USP22 form a subcomplex required for histone deubiquitination. Interacts directly with ATXN7L3; leading to its recruitment to the SAGA complex. Interacts with ATXN7L3 and weakly with ATXN7L3B. Interacts with MED1. Phosphorylated in G2/M phase, but not in G1 phase by CDK1. Post-translationally, ubiquitinated and subsequently degraded in a CDC20-dependent manner.

Its subcellular location is the nucleus. The protein resides in the cytoplasm. The catalysed reaction is Thiol-dependent hydrolysis of ester, thioester, amide, peptide and isopeptide bonds formed by the C-terminal Gly of ubiquitin (a 76-residue protein attached to proteins as an intracellular targeting signal).. Functionally, deubiquitinase that plays a role in several cellular processes including transcriptional regulation, cell cycle progression or innate immunity. As part of the transcription regulatory histone acetylation (HAT) complex SAGA, catalyzes the deubiquitination of both histones H2A and H2B, thereby acting as a transcriptional coactivator. Recruited to specific gene promoters by activators such as MYC, where it is required for transcription. Facilitates cell-cycle progression by stabilizing CCNB1 and antagonizing its proteasome-mediated degradation in a cell cycle-specific manner. Modulates cell cycle progression and apoptosis also by antagonizing TP53 transcriptional activation through deacetylase SIRT1 stabilization. Plays multiple roles in immunity and inflammation. Participates in antiviral response by deubiquitinating the importin KPNA2, leading to IRF3 nuclear translocation and subsequent type I interferon production. Acts as a central regulator of type III IFN signaling by negatively regulating STING1 activation and ubiquitination. Inhibits NLRP3 inflammasome activation by promoting NLRP3 degradation through ATG5-dependent autophagy. Deubiquitinates CD274 to induce its stabilization and thereby participates in maintenance of immune tolerance to self. Controls necroptotic cell death by regulating RIPK3 phosphorylation and ubiquitination. During bacterial infection, promotes pro-inflammatory response by targeting TRAF6 and removing its 'Lys-48'-linked polyubiquitination. The polypeptide is Ubiquitin carboxyl-terminal hydrolase 22 (USP22) (Bos taurus (Bovine)).